The following is a 170-amino-acid chain: Ureidoglycolate lyase (170 aa).

The protein belongs to the ureidoglycolate lyase family. As to quaternary structure, homodimer. Ni(2+) serves as cofactor.

It catalyses the reaction (S)-ureidoglycolate = urea + glyoxylate. The protein operates within nitrogen metabolism; (S)-allantoin degradation. In terms of biological role, catalyzes the catabolism of the allantoin degradation intermediate (S)-ureidoglycolate, generating urea and glyoxylate. Involved in the utilization of allantoin as nitrogen source. The chain is Ureidoglycolate lyase from Pseudomonas savastanoi pv. phaseolicola (strain 1448A / Race 6) (Pseudomonas syringae pv. phaseolicola (strain 1448A / Race 6)).